A 595-amino-acid chain; its full sequence is Merlin (595 aa).

Phosphoserine is present on Ser13. One can recognise an FERM domain in the interval 22 to 311 (FTVRIVTMDA…GNHDLFMRRR (290 aa)). A Phosphoserine; by PAK modification is found at Ser518.

As to quaternary structure, interacts with NHERF1, HGS and AGAP2. Interacts with LAYN. Interacts with SGSM3. Interacts (via FERM domain) with MPP1. Interacts with WWC1. Interacts with the CUL4A-RBX1-DDB1-VprBP/DCAF1 E3 ubiquitin-protein ligase complex. The unphosphorylated form interacts (via FERM domain) with VPRBP/DCAF1. Interacts (via FERM domain) with NOP53; the interaction is direct. Interacts with SCHIP1; the interaction is direct. Post-translationally, phosphorylation of Ser-518 inhibits nuclear localization by disrupting the intramolecular association of the FERM domain with the C-terminal tail. The dephosphorylation of Ser-518 favors the interaction with NOP53. In terms of processing, ubiquitinated by the CUL4A-RBX1-DDB1-DCAF1/VprBP E3 ubiquitin-protein ligase complex for ubiquitination and subsequent proteasome-dependent degradation. As to expression, widely expressed. Isoform 1 and isoform 3 are predominant. Isoform 4, isoform 5 and isoform 6 are expressed moderately. Isoform 8 is found at low frequency. Isoform 7, isoform 9 and isoform 10 are not expressed in adult tissues, with the exception of adult retina expressing isoform 10. Isoform 9 is faintly expressed in fetal brain, heart, lung, skeletal muscle and spleen. Fetal thymus expresses isoforms 1, 7, 9 and 10 at similar levels.

Its subcellular location is the cell projection. The protein resides in the filopodium membrane. It is found in the ruffle membrane. It localises to the nucleus. The protein localises to the cytoplasm. Its subcellular location is the perinuclear region. The protein resides in the cytoplasmic granule. It is found in the cytoskeleton. Functionally, probable regulator of the Hippo/SWH (Sav/Wts/Hpo) signaling pathway, a signaling pathway that plays a pivotal role in tumor suppression by restricting proliferation and promoting apoptosis. Along with WWC1 can synergistically induce the phosphorylation of LATS1 and LATS2 and can probably function in the regulation of the Hippo/SWH (Sav/Wts/Hpo) signaling pathway. May act as a membrane stabilizing protein. May inhibit PI3 kinase by binding to AGAP2 and impairing its stimulating activity. Suppresses cell proliferation and tumorigenesis by inhibiting the CUL4A-RBX1-DDB1-VprBP/DCAF1 E3 ubiquitin-protein ligase complex. This is Merlin (NF2) from Homo sapiens (Human).